We begin with the raw amino-acid sequence, 478 residues long: Glycogen synthase (478 aa).

K15 lines the ADP-alpha-D-glucose pocket.

This sequence belongs to the glycosyltransferase 1 family. Bacterial/plant glycogen synthase subfamily.

It carries out the reaction [(1-&gt;4)-alpha-D-glucosyl](n) + ADP-alpha-D-glucose = [(1-&gt;4)-alpha-D-glucosyl](n+1) + ADP + H(+). The protein operates within glycan biosynthesis; glycogen biosynthesis. In terms of biological role, synthesizes alpha-1,4-glucan chains using ADP-glucose. The protein is Glycogen synthase of Bacillus cytotoxicus (strain DSM 22905 / CIP 110041 / 391-98 / NVH 391-98).